Here is a 123-residue protein sequence, read N- to C-terminus: Guanine nucleotide exchange factor MSS4 (123 aa).

At Met1 the chain carries N-acetylmethionine. An MSS4 domain is found at 9–123 (ELVSAEGRNR…YVALERVSHE (115 aa)). Positions 23, 26, 94, and 97 each coordinate Zn(2+).

Belongs to the DSS4/MSS4 family. As to quaternary structure, interacts with RAB8A.

Functionally, guanine-nucleotide-releasing protein that acts on members of the SEC4/YPT1/RAB subfamily. Stimulates GDP release from both YPT1, RAB3A and RAB10, but is less active on these proteins than on the SEC4 protein. Might play a general role in vesicular transport. The protein is Guanine nucleotide exchange factor MSS4 of Mus musculus (Mouse).